The primary structure comprises 396 residues: MAGSSLRQVAVFGATGSIGASALDVIARHPERLRASVLSAGSKVEDLLALCAAHQPAHALIADAALYPALRDGLRALGLATQAHAGAEALDALAGSDACDTVVAAIVGAAGLPSTLAAARAGKRLLLANKESLVLAGELLTRTATAAGAEIIPIDSEHSAIFQCLRSCDAGRGVRRVILTASGGPFRGRDRAGLAAVTPAQAVAHPKWSMGPKISVDSATLMNKGLEVIEAHHLFGLPGEQIDVLVHPQSLVHSLVEFVDGSTLAQLGLPDMRTTLAVGLAWPERVESGVGGLDLLSQGRLDFEAPDTAAFPCLRLAWDALRAGGTAPAILNAANEVAVSAFLQGQVGFLAIPALVEHALTTLPRHNADTLDTLLFADAQARQITERALAHHALHA.

NADPH-binding residues include Thr15, Gly16, Ser17, Ile18, Gly41, and Asn129. Lys130 is a 1-deoxy-D-xylulose 5-phosphate binding site. Residue Glu131 participates in NADPH binding. Asp155 provides a ligand contact to Mn(2+). Positions 156, 157, 182, and 205 each coordinate 1-deoxy-D-xylulose 5-phosphate. Glu157 is a binding site for Mn(2+). Gly211 is a binding site for NADPH. 1-deoxy-D-xylulose 5-phosphate contacts are provided by Ser218, Asn223, Lys224, and Glu227. Position 227 (Glu227) interacts with Mn(2+).

The protein belongs to the DXR family. The cofactor is Mg(2+). Mn(2+) is required as a cofactor.

The enzyme catalyses 2-C-methyl-D-erythritol 4-phosphate + NADP(+) = 1-deoxy-D-xylulose 5-phosphate + NADPH + H(+). It functions in the pathway isoprenoid biosynthesis; isopentenyl diphosphate biosynthesis via DXP pathway; isopentenyl diphosphate from 1-deoxy-D-xylulose 5-phosphate: step 1/6. Its function is as follows. Catalyzes the NADPH-dependent rearrangement and reduction of 1-deoxy-D-xylulose-5-phosphate (DXP) to 2-C-methyl-D-erythritol 4-phosphate (MEP). The polypeptide is 1-deoxy-D-xylulose 5-phosphate reductoisomerase (Xanthomonas oryzae pv. oryzae (strain MAFF 311018)).